A 340-amino-acid polypeptide reads, in one-letter code: Probable tRNA pseudouridine synthase B (340 aa).

D82 functions as the Nucleophile in the catalytic mechanism. The PUA domain maps to 250-325 (LPKVWIKDSA…IAVDVEKVFM (76 aa)).

Belongs to the pseudouridine synthase TruB family. Type 2 subfamily.

It carries out the reaction uridine(55) in tRNA = pseudouridine(55) in tRNA. Its function is as follows. Could be responsible for synthesis of pseudouridine from uracil-55 in the psi GC loop of transfer RNAs. The chain is Probable tRNA pseudouridine synthase B from Pyrococcus furiosus (strain ATCC 43587 / DSM 3638 / JCM 8422 / Vc1).